The following is a 446-amino-acid chain: Signal recognition particle protein (446 aa).

Residues 108–115, 191–195, and 249–252 each bind GTP; these read GLQGAGKT, DTAGR, and TKLD.

This sequence belongs to the GTP-binding SRP family. SRP54 subfamily. As to quaternary structure, part of the signal recognition particle protein translocation system, which is composed of SRP and FtsY. Interacts with a small cytoplasmic RNA (sc-RNA).

It is found in the cytoplasm. The catalysed reaction is GTP + H2O = GDP + phosphate + H(+). Functionally, involved in targeting and insertion of nascent membrane proteins into the cytoplasmic membrane. Binds to the hydrophobic signal sequence of the ribosome-nascent chain (RNC) as it emerges from the ribosomes. The SRP-RNC complex is then targeted to the cytoplasmic membrane where it interacts with the SRP receptor FtsY. Interaction with FtsY leads to the transfer of the RNC complex to the Sec translocase for insertion into the membrane, the hydrolysis of GTP by both Ffh and FtsY, and the dissociation of the SRP-FtsY complex into the individual components. The sequence is that of Signal recognition particle protein from Bacillus subtilis (strain 168).